The sequence spans 597 residues: uncharacterized protein (597 aa).

5 helical membrane passes run 37-57, 67-87, 109-129, 134-154, and 162-182; these read VLII…LWPV, IFWL…LQFA, GGER…YAAI, SVSL…FIAW, and ALMT…LAIV. A Histidine kinase domain is found at 393 to 597; the sequence is HQLARDLHDG…QITIFVPIES (205 aa).

The protein localises to the cell membrane. This is an uncharacterized protein from Chloroflexus aurantiacus (strain ATCC 29366 / DSM 635 / J-10-fl).